The sequence spans 498 residues: Lysine--tRNA ligase (498 aa).

Mg(2+) is bound by residues E401 and E408.

This sequence belongs to the class-II aminoacyl-tRNA synthetase family. As to quaternary structure, homodimer. Mg(2+) is required as a cofactor.

The protein localises to the cytoplasm. The enzyme catalyses tRNA(Lys) + L-lysine + ATP = L-lysyl-tRNA(Lys) + AMP + diphosphate. The sequence is that of Lysine--tRNA ligase from Dehalococcoides mccartyi (strain CBDB1).